The primary structure comprises 67 residues: Large ribosomal subunit protein uL29 (67 aa).

Belongs to the universal ribosomal protein uL29 family.

The chain is Large ribosomal subunit protein uL29 from Staphylothermus marinus (strain ATCC 43588 / DSM 3639 / JCM 9404 / F1).